We begin with the raw amino-acid sequence, 73 residues long: Small hydrophobic protein (73 aa).

The Intravirion segment spans residues 1–19 (MNNTSTMIEFTGKFWTYFT). A helical; Signal-anchor for type II membrane protein transmembrane segment spans residues 20–40 (LVFMMLIIGFFFVITSLVAAI). Residues 41-73 (LNKLCDLNDHHTNSLDIRTGLRNDTQSITRAHV) are Virion surface-facing. Residue asparagine 63 is glycosylated (N-linked (GlcNAc...) asparagine; by host).

This sequence belongs to the orthopneumovirus small hydrophobic protein family. As to quaternary structure, homopentamer forming a funnel-like pore. Interacts with glycoprotein G; this interaction occurs on the surface of virion particles and infected cells. Interacts with host BCAP31 (via C-terminus); this interaction is direct. In terms of processing, four species of SH have been detected in infected cell cytoplasm: a 7.5 kDa non-glycosylated form (SH0), a 13-15 kDa form that contains one or two N-linked carbohydrate side chains of the high-mannose type (SHg), a 21-30 kDa polylactosaminoglycan-modified form of the protein (SHp), and the isoform generated by alternative translational initiation. Of these different forms, SH0 is by far the most abundant protein detected during virus infection. Tyrosine phosphorylated.

It is found in the virion membrane. It localises to the host cell membrane. The protein localises to the host Golgi apparatus membrane. The protein resides in the host endoplasmic reticulum membrane. With respect to regulation, channel activity is inhibited by copper. Also inhibited by small-molecule pyronin B. In terms of biological role, viroporin that forms a homopentameric ion channel displaying low ion selectivity. May play a role in virus morphogenesis and pathogenicity at various stages of the viral life cycle. Accumulates at the membrane of the Golgi apparatus in infected cells and may facilitate virus release by modifying the secretory pathway. May enhance host membrane permeability and disrupt cellular ion homeostasis, which can be sensed as damage-associated molecular patterns/danger signals, triggering NLRP3 inflammasome activation and inflammatory immune response. Also inhibits host TNFA-mediated signaling pathway and may delay apoptosis, allowing time for the virus to replicate. The chain is Small hydrophobic protein (SH) from Bovine respiratory syncytial virus (strain A51908) (BRS).